A 290-amino-acid polypeptide reads, in one-letter code: UPF0761 membrane protein YihY (290 aa).

The next 6 membrane-spanning stretches (helical) occupy residues 44–64 (LLSL…FPMF), 104–124 (VGAC…DSAL), 140–160 (FAVY…SLAI), 183–203 (IFPL…VPTI), 210–230 (AIVG…GFAL), and 244–264 (VLAV…IVLL).

The protein belongs to the UPF0761 family.

Its subcellular location is the cell inner membrane. In Shigella boydii serotype 4 (strain Sb227), this protein is UPF0761 membrane protein YihY.